The sequence spans 427 residues: 3-phosphoshikimate 1-carboxyvinyltransferase (427 aa).

3-phosphoshikimate is bound by residues Lys20, Ser21, and Arg25. Lys20 is a binding site for phosphoenolpyruvate. Positions 92 and 120 each coordinate phosphoenolpyruvate. The 3-phosphoshikimate site is built by Ser166, Gln168, Asp312, and Lys339. Gln168 contacts phosphoenolpyruvate. Asp312 serves as the catalytic Proton acceptor. Residues Arg343 and Arg385 each coordinate phosphoenolpyruvate.

Belongs to the EPSP synthase family. Monomer.

The protein localises to the cytoplasm. The catalysed reaction is 3-phosphoshikimate + phosphoenolpyruvate = 5-O-(1-carboxyvinyl)-3-phosphoshikimate + phosphate. Its pathway is metabolic intermediate biosynthesis; chorismate biosynthesis; chorismate from D-erythrose 4-phosphate and phosphoenolpyruvate: step 6/7. Catalyzes the transfer of the enolpyruvyl moiety of phosphoenolpyruvate (PEP) to the 5-hydroxyl of shikimate-3-phosphate (S3P) to produce enolpyruvyl shikimate-3-phosphate and inorganic phosphate. This Streptococcus uberis (strain ATCC BAA-854 / 0140J) protein is 3-phosphoshikimate 1-carboxyvinyltransferase.